The chain runs to 63 residues: Conotoxin TeAr193 (63 aa).

An N-terminal signal peptide occupies residues 1–22 (MRCLPVFVILLLLIASAPSVDA). Residues 23–48 (QPKTKDDIPQASFLDNAKRYLQVLES) constitute a propeptide that is removed on maturation.

The protein belongs to the conotoxin T superfamily. In terms of processing, contains 2 disulfide bonds that can be either 'C1-C3, C2-C4' or 'C1-C4, C2-C3', since these disulfide connectivities have been observed for conotoxins with cysteine framework V (for examples, see AC P0DQQ7 and AC P81755). As to expression, expressed by the venom duct.

It is found in the secreted. In Conus textile (Cloth-of-gold cone), this protein is Conotoxin TeAr193.